A 272-amino-acid chain; its full sequence is Energy-coupling factor transporter ATP-binding protein EcfA1 (272 aa).

The region spanning 2-237 (IKVSDVCFSY…KNIIEKAKID (236 aa)) is the ABC transporter domain. Position 37 to 44 (37 to 44 (GHNGSGKS)) interacts with ATP.

The protein belongs to the ABC transporter superfamily. Energy-coupling factor EcfA family. Forms a stable energy-coupling factor (ECF) transporter complex composed of 2 membrane-embedded substrate-binding proteins (S component), 2 ATP-binding proteins (A component) and 2 transmembrane proteins (T component).

It is found in the cell membrane. In terms of biological role, ATP-binding (A) component of a common energy-coupling factor (ECF) ABC-transporter complex. Unlike classic ABC transporters this ECF transporter provides the energy necessary to transport a number of different substrates. In Mesomycoplasma hyopneumoniae (strain J / ATCC 25934 / NCTC 10110) (Mycoplasma hyopneumoniae), this protein is Energy-coupling factor transporter ATP-binding protein EcfA1.